A 364-amino-acid polypeptide reads, in one-letter code: Fructose-bisphosphate aldolase A (364 aa).

Tyrosine 5 is subject to Phosphotyrosine. Position 9 is a phosphothreonine (threonine 9). 2 positions are modified to phosphoserine: serine 36 and serine 39. At lysine 42 the chain carries N6-acetyllysine; alternate. Residue lysine 42 forms a Glycyl lysine isopeptide (Lys-Gly) (interchain with G-Cter in SUMO1); alternate linkage. Lysine 42 is covalently cross-linked (Glycyl lysine isopeptide (Lys-Gly) (interchain with G-Cter in SUMO2); alternate). Arginine 43 serves as a coordination point for beta-D-fructose 1,6-bisphosphate. Phosphoserine is present on serine 46. Lysine 99 is subject to N6-(2-hydroxyisobutyryl)lysine. Lysine 108 is subject to N6-acetyllysine. Lysine 111 bears the N6-acetyllysine; alternate mark. Lysine 111 is modified (N6-malonyllysine; alternate). A Phosphoserine modification is found at serine 132. Lysine 147 bears the N6-(2-hydroxyisobutyryl)lysine mark. Glutamate 188 functions as the Proton acceptor in the catalytic mechanism. The active-site Schiff-base intermediate with dihydroxyacetone-P is the lysine 230. At serine 272 the chain carries Phosphoserine. Beta-D-fructose 1,6-bisphosphate is bound by residues 272-274, serine 301, and arginine 304; that span reads SGG. At lysine 312 the chain carries N6-malonyllysine. Lysine 330 carries the N6-acetyllysine modification.

The protein belongs to the class I fructose-bisphosphate aldolase family. As to quaternary structure, homotetramer. Interacts with SNX9 and WAS. Interacts with FBP2; the interaction blocks FBP2 inhibition by physiological concentrations of AMP and reduces inhibition by Ca(2+).

It localises to the cytoplasm. The protein localises to the myofibril. The protein resides in the sarcomere. It is found in the i band. Its subcellular location is the m line. The enzyme catalyses beta-D-fructose 1,6-bisphosphate = D-glyceraldehyde 3-phosphate + dihydroxyacetone phosphate. It participates in carbohydrate degradation; glycolysis; D-glyceraldehyde 3-phosphate and glycerone phosphate from D-glucose: step 4/4. Catalyzes the reversible conversion of beta-D-fructose 1,6-bisphosphate (FBP) into two triose phosphate and plays a key role in glycolysis and gluconeogenesis. In addition, may also function as scaffolding protein. The polypeptide is Fructose-bisphosphate aldolase A (Aldoa) (Mus musculus (Mouse)).